The chain runs to 229 residues: Putative N-acetylmannosamine-6-phosphate 2-epimerase (229 aa).

It belongs to the NanE family.

The catalysed reaction is an N-acyl-D-glucosamine 6-phosphate = an N-acyl-D-mannosamine 6-phosphate. Its pathway is amino-sugar metabolism; N-acetylneuraminate degradation; D-fructose 6-phosphate from N-acetylneuraminate: step 3/5. Functionally, converts N-acetylmannosamine-6-phosphate (ManNAc-6-P) to N-acetylglucosamine-6-phosphate (GlcNAc-6-P). The protein is Putative N-acetylmannosamine-6-phosphate 2-epimerase of Haemophilus ducreyi (strain 35000HP / ATCC 700724).